The sequence spans 1238 residues: MVQTIPIKPADVSWTDDQWKAIYASGQDTLVSAAAGSGKTAVLINRMIEKVIATDNPINVDELLVVTFTNASAAEMRHRMSEALEKAIVENPTSSHLRRQLSLINKAQISTLHSFCLAIVKQYAYLLDIDPGFRIANEAEVALLRDDIVADVLEGAYDSEEETQVQAIYRLVDSFTSDRDDQAIETLISKLYDTSRVHAEPQRWLWSLPKAYELAEEVTIDDLELSHYVKLTVRHSLEEAFVLISEMRAITLQPDGPAPYAETAEIDFAMIQEGIRISQEGTWQELFDYFATVKWSTLKRVSKDALVDVELQELAKKKREAAKKIMNKMKETYFIRTPARLLEEIRLMAPIIGTLVELTTIFSEQFRLAKLERGIIDFSDLEHYALQILTVEVDGELQPSPVALDLKKRFKEVLVDEYQDTNMLQETILQLVKSGEEQDGNLFMVGDVKQSIYRFRLAEPKLFMRKYSEFLETPDATGMRIDLNANFRSRKEVLNVTNYIFAQIMGERVGEILYDDNASLKPAAPYDEKEVPVELVVMHPPQDEETVDEQEDKTDEASELEELKKSQYEARFIIDRIRQMMEDGTTVYDTKSMTERPLKYSDIVILMRSMTWSTDLVEEFKLAGIPLYAESSKGYFDALEVMIILNVLKVVDNPYQDIPLASVLRAPFVGLTENELAKIRLADSKVPFYDALRQFIRSEGQGVQTTTFEKLQRFMLAFENWRDLARRGSLSDLIWKIYLDTHYYEMVGAMPNGKQRQANLRILHDRALMYEQTAFRGLFRFLRFIDRMRTRGDDLGTAKSIGEKDDVVRLVTIHSSKGLEYPVVFVAGMGRPFNKMDFHHPYLFDQDFGLAVKAIDPENRITYTSLPFLALKEKKELEMRAEEMRVLYVAMTRAKERLILVGSVKNWEKTRDNWQDAQNIPSDAPLQEYLRARANSYLDWIGPAVARHGDFASQATTSYKELDSPSHWWIQPIDTRHYSYDIQAFNDEIQQHLTTQEDEALLSEIKARFHAQYTYQKSTRKRSKTSVSEIKRLENLQRQEEPEYYFATPAKRTSTSIAPRPTFLQDQQLTGTEIGTAVHTVMQHIPQFGFDTIEAVKGFVANLVAKQLLTEAEGKVVPIKKVYHFFHTEIGQRFKQARQIRREMPFTISRVDEDGDAQIVQGIIDCLFEDEYGNWVLLDYKTDRILPHFAKEPALTKEIMGRYAVQLRVYSEAIESILQIKVSEKVLYLFDNEQTVQA.

The UvrD-like helicase ATP-binding domain occupies 12–490 (VSWTDDQWKA…IDLNANFRSR (479 aa)). 33 to 40 (AAAGSGKT) provides a ligand contact to ATP. A UvrD-like helicase C-terminal domain is found at 510 to 818 (GEILYDDNAS…RLVTIHSSKG (309 aa)).

This sequence belongs to the helicase family. AddA subfamily. As to quaternary structure, heterodimer of AddA and AddB/RexB. It depends on Mg(2+) as a cofactor.

It catalyses the reaction Couples ATP hydrolysis with the unwinding of duplex DNA by translocating in the 3'-5' direction.. It carries out the reaction ATP + H2O = ADP + phosphate + H(+). In terms of biological role, the heterodimer acts as both an ATP-dependent DNA helicase and an ATP-dependent, dual-direction single-stranded exonuclease. Recognizes the chi site generating a DNA molecule suitable for the initiation of homologous recombination. The AddA nuclease domain is required for chi fragment generation; this subunit has the helicase and 3' -&gt; 5' nuclease activities. The chain is ATP-dependent helicase/nuclease subunit A from Lysinibacillus sphaericus (strain C3-41).